Reading from the N-terminus, the 488-residue chain is GTPase Der (488 aa).

EngA-type G domains are found at residues Pro-3–Met-166 and Ile-199–Thr-372. Residues Gly-9–Ser-16, Asp-56–Ile-60, Asn-118–Asp-121, Gly-205–Ser-212, Asp-252–Val-256, and Asn-317–Asp-320 contribute to the GTP site. In terms of domain architecture, KH-like spans Arg-373–Asp-457. Residues Met-469–Lys-488 form a disordered region. A compositionally biased stretch (basic residues) spans Arg-473–Lys-488.

It belongs to the TRAFAC class TrmE-Era-EngA-EngB-Septin-like GTPase superfamily. EngA (Der) GTPase family. In terms of assembly, associates with the 50S ribosomal subunit.

Its function is as follows. GTPase that plays an essential role in the late steps of ribosome biogenesis. The protein is GTPase Der of Shewanella sp. (strain W3-18-1).